We begin with the raw amino-acid sequence, 104 residues long: Flagellar hook-basal body complex protein FliE (104 aa).

The protein belongs to the FliE family.

The protein localises to the bacterial flagellum basal body. This is Flagellar hook-basal body complex protein FliE from Edwardsiella ictaluri (strain 93-146).